Consider the following 241-residue polypeptide: Phosphoribosylaminoimidazole-succinocarboxamide synthase (241 aa).

It belongs to the SAICAR synthetase family.

The catalysed reaction is 5-amino-1-(5-phospho-D-ribosyl)imidazole-4-carboxylate + L-aspartate + ATP = (2S)-2-[5-amino-1-(5-phospho-beta-D-ribosyl)imidazole-4-carboxamido]succinate + ADP + phosphate + 2 H(+). It participates in purine metabolism; IMP biosynthesis via de novo pathway; 5-amino-1-(5-phospho-D-ribosyl)imidazole-4-carboxamide from 5-amino-1-(5-phospho-D-ribosyl)imidazole-4-carboxylate: step 1/2. The sequence is that of Phosphoribosylaminoimidazole-succinocarboxamide synthase from Caldivirga maquilingensis (strain ATCC 700844 / DSM 13496 / JCM 10307 / IC-167).